The sequence spans 144 residues: Deoxyuridine 5'-triphosphate nucleotidohydrolase (144 aa).

Substrate is bound by residues 63–65, asparagine 76, and 80–82; these read RSG and TID.

Belongs to the dUTPase family. Requires Mg(2+) as cofactor.

The catalysed reaction is dUTP + H2O = dUMP + diphosphate + H(+). Its pathway is pyrimidine metabolism; dUMP biosynthesis; dUMP from dCTP (dUTP route): step 2/2. In terms of biological role, this enzyme is involved in nucleotide metabolism: it produces dUMP, the immediate precursor of thymidine nucleotides and it decreases the intracellular concentration of dUTP so that uracil cannot be incorporated into DNA. This chain is Deoxyuridine 5'-triphosphate nucleotidohydrolase, found in Alkaliphilus metalliredigens (strain QYMF).